A 496-amino-acid polypeptide reads, in one-letter code: Glutamyl-tRNA(Gln) amidotransferase subunit A (496 aa).

Active-site charge relay system residues include Lys75 and Ser150. Residue Ser174 is the Acyl-ester intermediate of the active site.

The protein belongs to the amidase family. GatA subfamily. As to quaternary structure, heterotrimer of A, B and C subunits.

The catalysed reaction is L-glutamyl-tRNA(Gln) + L-glutamine + ATP + H2O = L-glutaminyl-tRNA(Gln) + L-glutamate + ADP + phosphate + H(+). Its function is as follows. Allows the formation of correctly charged Gln-tRNA(Gln) through the transamidation of misacylated Glu-tRNA(Gln) in organisms which lack glutaminyl-tRNA synthetase. The reaction takes place in the presence of glutamine and ATP through an activated gamma-phospho-Glu-tRNA(Gln). The protein is Glutamyl-tRNA(Gln) amidotransferase subunit A of Burkholderia mallei (strain NCTC 10247).